The primary structure comprises 461 residues: UDP-glycosyltransferase 88B1 (461 aa).

Residues Ser-278, 340–341 (WA), 358–366 (HCGWNSSLE), and 380–383 (YAEQ) each bind UDP-alpha-D-glucose.

Belongs to the UDP-glycosyltransferase family.

May glycosylate diterpenes or flavonols in leaves. In Stevia rebaudiana (Stevia), this protein is UDP-glycosyltransferase 88B1.